We begin with the raw amino-acid sequence, 1200 residues long: NACHT, LRR and PYD domains-containing protein 5 (1200 aa).

The region spanning 57–148 is the Pyrin domain; that stretch reads SLTFSSYGLQ…SEKARDDMKR (92 aa). Basic and acidic residues predominate over residues 142 to 152; sequence ARDDMKRHSPE. Positions 142 to 232 are disordered; that stretch reads ARDDMKRHSP…TEEQGHGGDT (91 aa). The segment covering 173–182 has biased composition (polar residues); the sequence is QAVQQDSATA. Low complexity-rich tracts occupy residues 192 to 202 and 209 to 221; these read QAMEQEGATAA and ISQA…ATAA. An NACHT domain is found at 280 to 602; that stretch reads RTVVLHGKSG…ALYYVLEGLE (323 aa). 286 to 293 contributes to the ATP binding site; that stretch reads GKSGIGKS. LRR repeat units follow at residues 704–727, 730–753, 780–803, 809–832, 836–863, 865–892, 893–916, 950–973, 979–1002, 1007–1034, 1036–1059, 1064–1092, and 1121–1142; these read LNSF…SFCL, CPYL…AEAC, HPHL…TLCA, TCKI…LWRI, NRNL…ALKH, KCLL…ILTT, SPSL…PLSD, NRSL…LLCR, HCSL…FLAL, NSWL…VMRE, SCHL…SLSC, SRHL…LKQK, and NRHL…MMKL.

This sequence belongs to the NLRP family. As to quaternary structure, component of the subcortical maternal complex (SCMC), at least composed of NLRP5, KHDC3, OOEP, and TLE6 isoform 1. Within the complex, interacts with OOEP, KHDC3L and TLE6. The SCMC may facilitate translocation of its components between the nuclear and cytoplasmic compartments. As part of the SCMC interacts with the SCMC-associated protein ZBED3. As part of the SCMC interacts with the SCMC-associated protein CFL1/Cofilin-1. Interacts with PRKCE. Interacts with TUBB3 at cytoskeleton microtubules. Phosphorylated by PRKCE. In terms of tissue distribution, expressed in cumulus cells (at protein level). Highly abundant in oocytes and early embryos, however poorly expressed in somatic tissues such as the liver and spinal cord.

It is found in the cytoplasm. It localises to the cytoplasmic vesicle. The protein localises to the secretory vesicle. Its subcellular location is the cortical granule. The protein resides in the mitochondrion. It is found in the nucleus. It localises to the nucleolus. The protein localises to the golgi apparatus. Its function is as follows. Component of the subcortical maternal complex (SCMC), a multiprotein complex that plays a key role in early embryonic development. The SCMC complex is a structural constituent of cytoplasmic lattices, which consist in fibrous structures found in the cytoplasm of oocytes and preimplantation embryos. They are required to store maternal proteins critical for embryonic development, such as proteins that control epigenetic reprogramming of the preimplantation embryo, and prevent their degradation or activation. Required for the localization of cortical granules to the cortex of oocytes, via association with the cortical actin scaffold. Required for cortical actin clearance prior to oocyte exocytosis and prevention of polyspermy. Involved in regulating post-fertilization Ca(2+) release and endoplasmic reticulum storage (ER) storage via regulation of cellular localization. May be involved in the localization of mitochondria to the cytoplasm and perinuclear region in oocytes and early stage embryos, independent of its role in CPL formation. In Homo sapiens (Human), this protein is NACHT, LRR and PYD domains-containing protein 5 (NLRP5).